A 903-amino-acid chain; its full sequence is Protein translocase subunit SecA (903 aa).

ATP-binding positions include Q87, 105 to 109 (GEGKT), and D507. Residues 854-893 (STMADSSGDVKSSTAESKAPYVRDGRKVGRNEPCPCGSGK) form a disordered region. Residues 856–869 (MADSSGDVKSSTAE) are compositionally biased toward polar residues. Residues 874–883 (YVRDGRKVGR) are compositionally biased toward basic and acidic residues. 4 residues coordinate Zn(2+): C887, C889, C898, and H899.

The protein belongs to the SecA family. Monomer and homodimer. Part of the essential Sec protein translocation apparatus which comprises SecA, SecYEG and auxiliary proteins SecDF-YajC and YidC. The cofactor is Zn(2+).

It localises to the cell inner membrane. Its subcellular location is the cytoplasm. The enzyme catalyses ATP + H2O + cellular proteinSide 1 = ADP + phosphate + cellular proteinSide 2.. Functionally, part of the Sec protein translocase complex. Interacts with the SecYEG preprotein conducting channel. Has a central role in coupling the hydrolysis of ATP to the transfer of proteins into and across the cell membrane, serving both as a receptor for the preprotein-SecB complex and as an ATP-driven molecular motor driving the stepwise translocation of polypeptide chains across the membrane. The protein is Protein translocase subunit SecA of Nitrosococcus oceani (strain ATCC 19707 / BCRC 17464 / JCM 30415 / NCIMB 11848 / C-107).